We begin with the raw amino-acid sequence, 911 residues long: Protein translocase subunit SecA (911 aa).

Residues Gln86, 104 to 108 (GEGKT), and Asp494 each bind ATP. Residues 856–911 (VEGIDAPQRPAQLRFTGPSEDGQSAVTRSGTDSGATVAAGTNRRSRRQAERRGRRG) are disordered. Over residues 876-889 (DGQSAVTRSGTDSG) the composition is skewed to polar residues. Over residues 902–911 (RQAERRGRRG) the composition is skewed to basic and acidic residues.

Belongs to the SecA family. As to quaternary structure, monomer and homodimer. Part of the essential Sec protein translocation apparatus which comprises SecA, SecYEG and auxiliary proteins SecDF. Other proteins may also be involved.

Its subcellular location is the cell membrane. It is found in the cytoplasm. It catalyses the reaction ATP + H2O + cellular proteinSide 1 = ADP + phosphate + cellular proteinSide 2.. In terms of biological role, part of the Sec protein translocase complex. Interacts with the SecYEG preprotein conducting channel. Has a central role in coupling the hydrolysis of ATP to the transfer of proteins into and across the cell membrane, serving as an ATP-driven molecular motor driving the stepwise translocation of polypeptide chains across the membrane. In Micrococcus luteus (strain ATCC 4698 / DSM 20030 / JCM 1464 / CCM 169 / CCUG 5858 / IAM 1056 / NBRC 3333 / NCIMB 9278 / NCTC 2665 / VKM Ac-2230) (Micrococcus lysodeikticus), this protein is Protein translocase subunit SecA.